The following is a 185-amino-acid chain: Ribosome-recycling factor (185 aa).

The protein belongs to the RRF family.

Its subcellular location is the cytoplasm. Responsible for the release of ribosomes from messenger RNA at the termination of protein biosynthesis. May increase the efficiency of translation by recycling ribosomes from one round of translation to another. This chain is Ribosome-recycling factor, found in Wolbachia pipientis wMel.